Here is a 689-residue protein sequence, read N- to C-terminus: Glycine--tRNA ligase beta subunit (689 aa).

This sequence belongs to the class-II aminoacyl-tRNA synthetase family. In terms of assembly, tetramer of two alpha and two beta subunits.

It localises to the cytoplasm. The catalysed reaction is tRNA(Gly) + glycine + ATP = glycyl-tRNA(Gly) + AMP + diphosphate. The sequence is that of Glycine--tRNA ligase beta subunit from Acinetobacter baumannii (strain ACICU).